A 464-amino-acid chain; its full sequence is Soluble pyridine nucleotide transhydrogenase (464 aa).

D35–C44 contacts FAD.

Belongs to the class-I pyridine nucleotide-disulfide oxidoreductase family. FAD is required as a cofactor.

It localises to the cytoplasm. It catalyses the reaction NAD(+) + NADPH = NADH + NADP(+). Conversion of NADPH, generated by peripheral catabolic pathways, to NADH, which can enter the respiratory chain for energy generation. This Pseudomonas paraeruginosa (strain DSM 24068 / PA7) (Pseudomonas aeruginosa (strain PA7)) protein is Soluble pyridine nucleotide transhydrogenase.